The primary structure comprises 590 residues: MNIYKRLKQDIDVVATSIINKLKSTSDSKEFDSLNDTIPIVLESSKDVNSYDISTNIAMLIAKKMNQNSITLANLFKKKLSHYPYIDNITIAGPGFINFVILQEEWTNYLAIILDGSYRKEYSSIGNNKKVNIEYVSANPTGPLHIGHARAAVYGDVLAALLQCTGYQVTREYYVNDTGVQIDNLAKSVYLRYKQVITGQVADIPKGLYPGEYLISVGTKLAKEYGDKLLTLSEPEYLNIIKDVAVNNLLQSIKADLALIGVRHDVFFSEKKLHDSNVISKVIDLLSVKKLVYTGELSQPKGQSSDNWQPRSQLLFKSTIFGDNQDRPLQKEDGSWSYFASDIAYADNKIKRGFDYVIFILGADHIGYVSRIKAIIQALDFNQDITLDIKICQLVKLIENGVAVKMSKRSGSFTTIRDVYEIVGKDVIRFFMLTRKNNAVLDFDLVKLQEQSRDNPVFYVQYAYVRAGSILRKAKDNANIAYEIFSTNKSDFSLLSTKEELNLIKILAVWSHMLDGAVKNFEPHRIAIYLQKLAAEFHALWNLKSNDLDYRFIVLNDNNLTAARLALATAVREIIREGLKIIGITCVEVM.

A 'HIGH' region motif is present at residues 138-148; it reads ANPTGPLHIGH.

This sequence belongs to the class-I aminoacyl-tRNA synthetase family. As to quaternary structure, monomer.

The protein localises to the cytoplasm. The enzyme catalyses tRNA(Arg) + L-arginine + ATP = L-arginyl-tRNA(Arg) + AMP + diphosphate. In Orientia tsutsugamushi (strain Boryong) (Rickettsia tsutsugamushi), this protein is Arginine--tRNA ligase.